Reading from the N-terminus, the 78-residue chain is U29-theraphotoxin-Cg1a (78 aa).

A signal peptide spans 1 to 19; it reads MRYQTVFWILLIALCTVNP. Disulfide bonds link Cys-42–Cys-56, Cys-49–Cys-60, Cys-55–Cys-77, and Cys-67–Cys-73.

It belongs to the neurotoxin 13 (insecticidal toxin ABC) family. 03 (JZTX-59) subfamily. Expressed by the venom gland.

The protein resides in the secreted. In terms of biological role, probable ion channel inhibitor. In Chilobrachys guangxiensis (Chinese earth tiger tarantula), this protein is U29-theraphotoxin-Cg1a.